The chain runs to 116 residues: U30-theraphotoxin-Cg1a (116 aa).

A signal peptide spans 1–17; the sequence is MKLCVLTIASLLVTVTS. The propeptide occupies 18–53; it reads LETQKEIAEGSELTREETPSLVEHKEDEAAAASEKR. Positions 24–46 are disordered; it reads IAEGSELTREETPSLVEHKEDEA. Intrachain disulfides connect Cys55-Cys69, Cys62-Cys75, Cys66-Cys112, and Cys68-Cys88.

It belongs to the neurotoxin 03 (Tx2) family. 02 subfamily. HNTX-XV sub-subfamily. In terms of tissue distribution, expressed by the venom gland.

The protein resides in the secreted. In terms of biological role, probable ion channel inhibitor. The sequence is that of U30-theraphotoxin-Cg1a from Chilobrachys guangxiensis (Chinese earth tiger tarantula).